A 200-amino-acid chain; its full sequence is COMM domain-containing protein 7 (200 aa).

The COMM domain maps to 133–200; sequence QLIDMEWKFG…RVRTSMECFC (68 aa).

The protein belongs to the COMM domain-containing protein 7 family. Component of the commander complex consisting of the CCC subcomplex and the retriever subcomplex. Component of the CCC (COMMD/CCDC22/CCDC93) subcomplex consisting of COMMD1, COMMD2, COMMD3, COMMD4, COMMD5, COMMD6, COMMD7, COMMD8, COMMD9, COMMD10, CCDC22 and CCDC93; within the complex forms a heterodimer with COMMD9. Interacts with RELA. Interacts with CCDC22, CCDC93, SCNN1B, CUL7. In terms of tissue distribution, widely expressed with highest expression in lung.

The protein localises to the cytoplasmic vesicle. Scaffold protein in the commander complex that is essential for endosomal recycling of transmembrane cargos; the commander complex is composed of the CCC subcomplex and the retriever subcomplex. May modulate activity of cullin-RING E3 ubiquitin ligase (CRL) complexes. Associates with the NF-kappa-B complex and suppresses its transcriptional activity. In Homo sapiens (Human), this protein is COMM domain-containing protein 7 (COMMD7).